Here is a 100-residue protein sequence, read N- to C-terminus: RNA-binding protein YlxQ (100 aa).

The protein belongs to the eukaryotic ribosomal protein eL8 family.

RNA-binding protein that recognizes the K-turn motif present in ribosomal RNA, but also in box C/D and box C'/D' sRNAs. The chain is RNA-binding protein YlxQ from Bacillus subtilis (strain 168).